We begin with the raw amino-acid sequence, 161 residues long: Regulator of ribonuclease activity A (161 aa).

It belongs to the RraA family. Homotrimer. Binds to both RNA-binding sites in the C-terminal region of Rne and to RhlB.

It localises to the cytoplasm. Functionally, globally modulates RNA abundance by binding to RNase E (Rne) and regulating its endonucleolytic activity. Can modulate Rne action in a substrate-dependent manner by altering the composition of the degradosome. Modulates RNA-binding and helicase activities of the degradosome. The polypeptide is Regulator of ribonuclease activity A (Shigella dysenteriae serotype 1 (strain Sd197)).